The following is a 360-amino-acid chain: Peptide chain release factor 1 (360 aa).

Q235 is modified (N5-methylglutamine). Residues 280-293 (DKQSHEQQAKEAAT) are compositionally biased toward basic and acidic residues. The interval 280–300 (DKQSHEQQAKEAATRKSLIGS) is disordered.

Belongs to the prokaryotic/mitochondrial release factor family. In terms of processing, methylated by PrmC. Methylation increases the termination efficiency of RF1.

The protein resides in the cytoplasm. In terms of biological role, peptide chain release factor 1 directs the termination of translation in response to the peptide chain termination codons UAG and UAA. The protein is Peptide chain release factor 1 of Paraburkholderia xenovorans (strain LB400).